We begin with the raw amino-acid sequence, 461 residues long: Smoothelin-like protein 2 (461 aa).

Residues 55 to 88 (PLARTVADLQRDNQRLQAQLERLTRQVEALGLAS) adopt a coiled-coil conformation. Disordered regions lie at residues 87–193 (ASGM…LRLP) and 227–248 (LNPS…KNSS). The span at 94–107 (PGTPGTPSPPPAPG) shows a compositional bias: pro residues. Threonine 96 carries the post-translational modification Phosphothreonine. 3 positions are modified to phosphoserine: serine 101, serine 129, and serine 134. The segment covering 134–147 (SLDHDEASESEMRK) has biased composition (basic and acidic residues). Phosphoserine is present on residues serine 256 and serine 269. The tract at residues 260–307 (AVTASKHSNSPPLVTPPQSPVSPQPPAITQVHRQGERRRELVRSQTLP) is disordered. Over residues 272 to 285 (LVTPPQSPVSPQPP) the composition is skewed to pro residues. Threonine 274 bears the Phosphothreonine mark. A Phosphoserine modification is found at serine 278. Positions 292–301 (RQGERRRELV) are enriched in basic and acidic residues. Serine 344 is subject to Phosphoserine. A Calponin-homology (CH) domain is found at 351–458 (SSIKQILLEW…YVQSLYNHLR (108 aa)).

This sequence belongs to the smoothelin family.

The chain is Smoothelin-like protein 2 (SMTNL2) from Homo sapiens (Human).